Consider the following 140-residue polypeptide: Holo-[acyl-carrier-protein] synthase (140 aa).

D8 and E62 together coordinate Mg(2+).

This sequence belongs to the P-Pant transferase superfamily. AcpS family. Requires Mg(2+) as cofactor.

The protein resides in the cytoplasm. The catalysed reaction is apo-[ACP] + CoA = holo-[ACP] + adenosine 3',5'-bisphosphate + H(+). Transfers the 4'-phosphopantetheine moiety from coenzyme A to a Ser of acyl-carrier-protein. The chain is Holo-[acyl-carrier-protein] synthase from Cupriavidus necator (strain ATCC 17699 / DSM 428 / KCTC 22496 / NCIMB 10442 / H16 / Stanier 337) (Ralstonia eutropha).